Here is a 416-residue protein sequence, read N- to C-terminus: Prostate tumor-overexpressed gene 1 protein (416 aa).

A disordered region spans residues 1–53; that stretch reads MVRPRRAPYRSGAGGPLGGRGRPPRPLVVRAVRSRSWPASPRGPQPPRIRARS. Positions 12–21 are enriched in gly residues; sequence GAGGPLGGRG. Residues 27 to 36 show a composition bias toward low complexity; it reads LVVRAVRSRS. The residue at position 53 (Ser-53) is a Phosphoserine. Residues 184-416 form an interaction with FLOT1 region; the sequence is NGFAGCMLFP…QEQQQRGMGG (233 aa).

The protein belongs to the Mediator complex subunit 25 family. PTOV1 subfamily. May interact with CREBBP. Interacts with FLOT1. Ubiquitinated by the CRL2(KLHDC2) complex, which recognizes the diglycine (Gly-Gly) at the C-terminus, leading to its degradation. Ubiquitinated by the CRL2(APPBP2) complex, which recognizes the Arg-Xaa-Xaa-Gly sequence at the C-terminus, leading to its degradation. In terms of tissue distribution, expressed in brain, heart, kidney, liver, placenta, skeletal muscle and small intestine.

The protein resides in the cytoplasm. The protein localises to the nucleus. It is found in the cell membrane. It localises to the perinuclear region. May activate transcription. Required for nuclear translocation of FLOT1. Promotes cell proliferation. The polypeptide is Prostate tumor-overexpressed gene 1 protein (PTOV1) (Homo sapiens (Human)).